A 157-amino-acid chain; its full sequence is Endoribonuclease YbeY (157 aa).

Positions 121, 125, and 131 each coordinate Zn(2+).

The protein belongs to the endoribonuclease YbeY family. Zn(2+) serves as cofactor.

The protein localises to the cytoplasm. Its function is as follows. Single strand-specific metallo-endoribonuclease involved in late-stage 70S ribosome quality control and in maturation of the 3' terminus of the 16S rRNA. The polypeptide is Endoribonuclease YbeY (Salinispora tropica (strain ATCC BAA-916 / DSM 44818 / JCM 13857 / NBRC 105044 / CNB-440)).